The following is a 602-amino-acid chain: Probable translation initiation factor IF-2 (602 aa).

The tr-type G domain maps to 9-229 (LRQPIVVVLG…GLTQNYMKNK (221 aa)). Residues 18–25 (GHVDHGKT) are G1. A GTP-binding site is contributed by 18–25 (GHVDHGKT). A G2 region spans residues 43-47 (EMTQE). Residues 82–85 (DTPG) are G3. Residues 82–86 (DTPGH) and 136–139 (NKID) contribute to the GTP site. Positions 136 to 139 (NKID) are G4. Residues 204 to 206 (SAK) are G5.

Belongs to the TRAFAC class translation factor GTPase superfamily. Classic translation factor GTPase family. IF-2 subfamily.

In terms of biological role, function in general translation initiation by promoting the binding of the formylmethionine-tRNA to ribosomes. Seems to function along with eIF-2. In Sulfolobus acidocaldarius (strain ATCC 33909 / DSM 639 / JCM 8929 / NBRC 15157 / NCIMB 11770), this protein is Probable translation initiation factor IF-2 (infB).